The sequence spans 356 residues: Phosphoserine aminotransferase (356 aa).

Arg-41 lines the L-glutamate pocket. Residues 76–77 (AS), Trp-102, Thr-150, Asp-169, and Gln-192 each bind pyridoxal 5'-phosphate. N6-(pyridoxal phosphate)lysine is present on Lys-193. 234–235 (NT) is a pyridoxal 5'-phosphate binding site.

This sequence belongs to the class-V pyridoxal-phosphate-dependent aminotransferase family. SerC subfamily. In terms of assembly, homodimer. The cofactor is pyridoxal 5'-phosphate.

The protein resides in the cytoplasm. It catalyses the reaction O-phospho-L-serine + 2-oxoglutarate = 3-phosphooxypyruvate + L-glutamate. The enzyme catalyses 4-(phosphooxy)-L-threonine + 2-oxoglutarate = (R)-3-hydroxy-2-oxo-4-phosphooxybutanoate + L-glutamate. It participates in amino-acid biosynthesis; L-serine biosynthesis; L-serine from 3-phospho-D-glycerate: step 2/3. The protein operates within cofactor biosynthesis; pyridoxine 5'-phosphate biosynthesis; pyridoxine 5'-phosphate from D-erythrose 4-phosphate: step 3/5. Functionally, catalyzes the reversible conversion of 3-phosphohydroxypyruvate to phosphoserine and of 3-hydroxy-2-oxo-4-phosphonooxybutanoate to phosphohydroxythreonine. The sequence is that of Phosphoserine aminotransferase from Flavobacterium johnsoniae (strain ATCC 17061 / DSM 2064 / JCM 8514 / BCRC 14874 / CCUG 350202 / NBRC 14942 / NCIMB 11054 / UW101) (Cytophaga johnsonae).